A 193-amino-acid chain; its full sequence is HMG-Y-related protein A (193 aa).

The H15 domain occupies proline 11–alanine 81. Residues asparagine 75–alanine 193 form a disordered region. The Nuclear localization signal 1 (NLS) motif lies at proline 86–arginine 92. DNA-binding regions (a.T hook) lie at residues lysine 87–aspartate 98, glycine 113–serine 124, proline 138–lysine 149, and lysine 173–proline 184. Residues proline 145 to lysine 149 carry the Nuclear localization signal 2 (NLS) motif.

It belongs to the histone H1/H5 family. Post-translationally, phosphorylated by CDK, this phosphorylation prevents DNA-binding. Motility is increased when hypophosphorylated. Acetylated.

Its subcellular location is the nucleus. The protein localises to the nucleolus. Its function is as follows. Binds A/T-rich DNA (e.g. present in the storage gamma-zein gene promoter) with a highly dynamic distribution into the nucleus. Probably involved in endosperm development, during cells shift from a mitotic cycle to endoreduplication leading to massive synthesis of storage proteins (zeins) and starch. The chain is HMG-Y-related protein A from Zea mays (Maize).